Reading from the N-terminus, the 285-residue chain is Homeobox protein vex1 (285 aa).

2 disordered regions span residues 30–54 and 69–88; these read KSGN…LPSV and NEER…APQE. The span at 69–80 shows a compositional bias: basic and acidic residues; sequence NEERSPPVKDQL. Residues 131–190 constitute a DNA-binding region (homeobox); it reads AARARTKFSPEQLEELERSFKENRYIGSSEKRRLSKVLKLSETQIKTWFQNRRMKFKRQT.

As to expression, widely expressed in the embryo prior to gastrulation. Becomes restricted to the ventral marginal zone by mid/late gastrulation. Ventral localization persists during gastrulation and neurulation in the ventral region of the closed blastopore and in the proctodeum during tail bud stages.

The protein localises to the nucleus. Functionally, transcriptional repressor. Acts in a ventral signaling pathway downstream of bmp4 to antagonize the Spemann organizer and ventrally pattern the embryonic mesoderm. Represses transcription of the dorsal genes gsc and otx2. The chain is Homeobox protein vex1 from Xenopus laevis (African clawed frog).